The following is a 500-amino-acid chain: Probable malate:quinone oxidoreductase (500 aa).

It belongs to the MQO family. The cofactor is FAD.

The catalysed reaction is (S)-malate + a quinone = a quinol + oxaloacetate. It functions in the pathway carbohydrate metabolism; tricarboxylic acid cycle; oxaloacetate from (S)-malate (quinone route): step 1/1. In Bacillus cytotoxicus (strain DSM 22905 / CIP 110041 / 391-98 / NVH 391-98), this protein is Probable malate:quinone oxidoreductase.